The following is a 303-amino-acid chain: Protoheme IX farnesyltransferase (303 aa).

9 helical membrane-spanning segments follow: residues 17–37 (GVVMLLMVTAVAGMFLATEPA), 42–62 (LATFIPAFVGLSLAMMASAAI), 91–111 (AAITFAVLLATASMIMLYFLV), 114–134 (LTAWLTLFGFVGYAFIYTLYL), 142–162 (IVIGGIAGAIPPLLGWTAVTG), 168–188 (AWLLVLIIFVWTPPHFWALAI), 208–228 (IPFTRESVLYYTILLFICTLL), 231–251 (LTGMSDLIYLLSALILGLVFL), and 270–290 (FGYSITYLFALFTALLVDHYL).

It belongs to the UbiA prenyltransferase family. Protoheme IX farnesyltransferase subfamily.

Its subcellular location is the cell inner membrane. It catalyses the reaction heme b + (2E,6E)-farnesyl diphosphate + H2O = Fe(II)-heme o + diphosphate. It participates in porphyrin-containing compound metabolism; heme O biosynthesis; heme O from protoheme: step 1/1. In terms of biological role, converts heme B (protoheme IX) to heme O by substitution of the vinyl group on carbon 2 of heme B porphyrin ring with a hydroxyethyl farnesyl side group. The polypeptide is Protoheme IX farnesyltransferase (Alcanivorax borkumensis (strain ATCC 700651 / DSM 11573 / NCIMB 13689 / SK2)).